Reading from the N-terminus, the 231-residue chain is Thiamine import ATP-binding protein ThiQ (231 aa).

One can recognise an ABC transporter domain in the interval 2 to 230 (LHLDRLLIRQ…PPPALRAYLG (229 aa)). Position 32–39 (32–39 (GPSGGGKS)) interacts with ATP.

This sequence belongs to the ABC transporter superfamily. Thiamine importer (TC 3.A.1.19.1) family. The complex is composed of two ATP-binding proteins (ThiQ), two transmembrane proteins (ThiP) and a solute-binding protein (ThiB).

The protein localises to the cell inner membrane. It catalyses the reaction thiamine(out) + ATP + H2O = thiamine(in) + ADP + phosphate + H(+). Functionally, part of the ABC transporter complex ThiBPQ involved in thiamine import. Responsible for energy coupling to the transport system. This is Thiamine import ATP-binding protein ThiQ from Cereibacter sphaeroides (strain ATCC 17023 / DSM 158 / JCM 6121 / CCUG 31486 / LMG 2827 / NBRC 12203 / NCIMB 8253 / ATH 2.4.1.) (Rhodobacter sphaeroides).